A 347-amino-acid polypeptide reads, in one-letter code: Anthranilate phosphoribosyltransferase (347 aa).

5-phospho-alpha-D-ribose 1-diphosphate-binding positions include G88, 91–92 (GD), T96, 98–101 (NIST), 116–124 (KHGNRSVSS), and S128. G88 lines the anthranilate pocket. S100 contacts Mg(2+). N119 lines the anthranilate pocket. Residue R174 coordinates anthranilate. Mg(2+) is bound by residues D232 and E233.

This sequence belongs to the anthranilate phosphoribosyltransferase family. In terms of assembly, homodimer. Mg(2+) is required as a cofactor.

It catalyses the reaction N-(5-phospho-beta-D-ribosyl)anthranilate + diphosphate = 5-phospho-alpha-D-ribose 1-diphosphate + anthranilate. It participates in amino-acid biosynthesis; L-tryptophan biosynthesis; L-tryptophan from chorismate: step 2/5. Its function is as follows. Catalyzes the transfer of the phosphoribosyl group of 5-phosphorylribose-1-pyrophosphate (PRPP) to anthranilate to yield N-(5'-phosphoribosyl)-anthranilate (PRA). The chain is Anthranilate phosphoribosyltransferase from Shewanella sp. (strain ANA-3).